Consider the following 266-residue polypeptide: Very-long-chain aldehyde decarbonylase GL1-11 (266 aa).

The next 4 membrane-spanning stretches (helical) occupy residues 25-45, 74-94, 106-126, and 163-183; these read VVTF…SLLF, ILYH…AFKF, WTVI…IFYW, and ILFL…HLFT. A Fatty acid hydroxylase domain is found at 113–248; that stretch reads VLFYFVLEDF…FVYMDWLFGT (136 aa).

It belongs to the sterol desaturase family. In terms of assembly, homodimer.

Its subcellular location is the endoplasmic reticulum membrane. The enzyme catalyses a long-chain fatty aldehyde + 2 NADPH + O2 + H(+) = a long-chain alkane + formate + 2 NADP(+) + H2O. Aldehyde decarbonylase involved in the conversion of aldehydes to alkanes. Core component of a very-long-chain alkane synthesis complex. This chain is Very-long-chain aldehyde decarbonylase GL1-11, found in Oryza sativa subsp. indica (Rice).